Reading from the N-terminus, the 362-residue chain is Phosphoserine aminotransferase (362 aa).

L-glutamate contacts are provided by S9 and R42. Pyridoxal 5'-phosphate contacts are provided by residues 76–77 (GR), W102, T153, D174, and Q197. An N6-(pyridoxal phosphate)lysine modification is found at K198. Residue 239 to 240 (NT) coordinates pyridoxal 5'-phosphate.

It belongs to the class-V pyridoxal-phosphate-dependent aminotransferase family. SerC subfamily. As to quaternary structure, homodimer. It depends on pyridoxal 5'-phosphate as a cofactor.

It is found in the cytoplasm. The catalysed reaction is O-phospho-L-serine + 2-oxoglutarate = 3-phosphooxypyruvate + L-glutamate. The enzyme catalyses 4-(phosphooxy)-L-threonine + 2-oxoglutarate = (R)-3-hydroxy-2-oxo-4-phosphooxybutanoate + L-glutamate. It participates in amino-acid biosynthesis; L-serine biosynthesis; L-serine from 3-phospho-D-glycerate: step 2/3. The protein operates within cofactor biosynthesis; pyridoxine 5'-phosphate biosynthesis; pyridoxine 5'-phosphate from D-erythrose 4-phosphate: step 3/5. Catalyzes the reversible conversion of 3-phosphohydroxypyruvate to phosphoserine and of 3-hydroxy-2-oxo-4-phosphonooxybutanoate to phosphohydroxythreonine. The sequence is that of Phosphoserine aminotransferase from Escherichia coli O6:K15:H31 (strain 536 / UPEC).